The following is a 173-amino-acid chain: MSVESQPVEKISELPAGSTTVVHAEKAQKLIQKLGLKRVEGITRVAMRRPKNILLIINEPIVYKSSNNAYIVLGKVTVEDMAAQARAFNESQKQATETKEEAAITEESGDAQPADTAKIEESFEQEKAVDETGVDAKDIELVMAQANVSRAKAVTALKENNSDVVNAIMSLTM.

In terms of domain architecture, NAC-A/B spans 21–85; the sequence is VVHAEKAQKL…VTVEDMAAQA (65 aa). The disordered stretch occupies residues 89–117; it reads NESQKQATETKEEAAITEESGDAQPADTA. S122 carries the phosphoserine modification. Positions 134-171 constitute a UBA domain; that stretch reads VDAKDIELVMAQANVSRAKAVTALKENNSDVVNAIMSL.

It belongs to the NAC-alpha family. Part of the nascent polypeptide-associated complex (NAC), consisting of ucp15 and btf3. NAC associates with ribosomes via btf3.

It is found in the cytoplasm. Its subcellular location is the nucleus. Functionally, component of the nascent polypeptide-associated complex (NAC), a dynamic component of the ribosomal exit tunnel, protecting the emerging polypeptides from interaction with other cytoplasmic proteins to ensure appropriate nascent protein targeting. The NAC complex also promotes mitochondrial protein import by enhancing productive ribosome interactions with the outer mitochondrial membrane and blocks the inappropriate interaction of ribosomes translating non-secretory nascent polypeptides with translocation sites in the membrane of the endoplasmic reticulum. Ucp15 may also be involved in transcription regulation. In Schizosaccharomyces pombe (strain 972 / ATCC 24843) (Fission yeast), this protein is Nascent polypeptide-associated complex subunit alpha (egd2).